The chain runs to 431 residues: Tol-Pal system protein TolB (431 aa).

Positions 1 to 26 are cleaved as a signal peptide; that stretch reads MSLMTKLGFRALVASCLITAGSAANA. A disordered region spans residues 406-431; it reads DGSAPPQILSVQGGSVREPSWGPFMQ.

The protein belongs to the TolB family. The Tol-Pal system is composed of five core proteins: the inner membrane proteins TolA, TolQ and TolR, the periplasmic protein TolB and the outer membrane protein Pal. They form a network linking the inner and outer membranes and the peptidoglycan layer.

Its subcellular location is the periplasm. In terms of biological role, part of the Tol-Pal system, which plays a role in outer membrane invagination during cell division and is important for maintaining outer membrane integrity. This Burkholderia orbicola (strain AU 1054) protein is Tol-Pal system protein TolB.